The chain runs to 177 residues: Large ribosomal subunit protein uL6 (177 aa).

Residues 152 to 171 show a composition bias toward basic and acidic residues; sequence RPPEPYKGKGVRYDDEEVRR. The interval 152-177 is disordered; sequence RPPEPYKGKGVRYDDEEVRRKEAKKK.

Belongs to the universal ribosomal protein uL6 family. Part of the 50S ribosomal subunit.

Its function is as follows. This protein binds to the 23S rRNA, and is important in its secondary structure. It is located near the subunit interface in the base of the L7/L12 stalk, and near the tRNA binding site of the peptidyltransferase center. The sequence is that of Large ribosomal subunit protein uL6 from Shewanella putrefaciens (strain CN-32 / ATCC BAA-453).